Here is an 839-residue protein sequence, read N- to C-terminus: Lon protease (839 aa).

Positions 31-224 (LFLIPIKSRP…KVLLFLKKEI (194 aa)) constitute a Lon N-terminal domain. Position 377–384 (377–384 (GPPGVGKT)) interacts with ATP. In terms of domain architecture, Lon proteolytic spans 613 to 790 (ASVPGTALGL…EEVALLLFDE (178 aa)). Residues Ser-696 and Lys-739 contribute to the active site. Residues 807 to 839 (IVNPTRKLSPKKKTTQKQKLSLSKQKGNNQKKK) are disordered. Low complexity predominate over residues 823–832 (KQKLSLSKQK).

Belongs to the peptidase S16 family. As to quaternary structure, homohexamer. Organized in a ring with a central cavity.

Its subcellular location is the cytoplasm. It carries out the reaction Hydrolysis of proteins in presence of ATP.. Functionally, ATP-dependent serine protease that mediates the selective degradation of mutant and abnormal proteins as well as certain short-lived regulatory proteins. Required for cellular homeostasis and for survival from DNA damage and developmental changes induced by stress. Degrades polypeptides processively to yield small peptide fragments that are 5 to 10 amino acids long. Binds to DNA in a double-stranded, site-specific manner. The protein is Lon protease of Leptospira interrogans serogroup Icterohaemorrhagiae serovar copenhageni (strain Fiocruz L1-130).